We begin with the raw amino-acid sequence, 306 residues long: Pyridoxal 5'-phosphate synthase subunit PdxS (306 aa).

Residue Asp36 participates in D-ribose 5-phosphate binding. The Schiff-base intermediate with D-ribose 5-phosphate role is filled by Lys93. Gly165 serves as a coordination point for D-ribose 5-phosphate. Residue Arg177 coordinates D-glyceraldehyde 3-phosphate. D-ribose 5-phosphate is bound by residues Gly226 and 247–248; that span reads GS.

It belongs to the PdxS/SNZ family. As to quaternary structure, in the presence of PdxT, forms a dodecamer of heterodimers.

It carries out the reaction aldehydo-D-ribose 5-phosphate + D-glyceraldehyde 3-phosphate + L-glutamine = pyridoxal 5'-phosphate + L-glutamate + phosphate + 3 H2O + H(+). Its pathway is cofactor biosynthesis; pyridoxal 5'-phosphate biosynthesis. Its function is as follows. Catalyzes the formation of pyridoxal 5'-phosphate from ribose 5-phosphate (RBP), glyceraldehyde 3-phosphate (G3P) and ammonia. The ammonia is provided by the PdxT subunit. Can also use ribulose 5-phosphate and dihydroxyacetone phosphate as substrates, resulting from enzyme-catalyzed isomerization of RBP and G3P, respectively. This chain is Pyridoxal 5'-phosphate synthase subunit PdxS, found in Salinispora arenicola (strain CNS-205).